Reading from the N-terminus, the 319-residue chain is Malate dehydrogenase (319 aa).

Residues G10–G15 and D34 each bind NAD(+). 2 residues coordinate substrate: R85 and R91. NAD(+) contacts are provided by residues N98 and I121–N123. N123 and R154 together coordinate substrate. The active-site Proton acceptor is the H178.

The protein belongs to the LDH/MDH superfamily. MDH type 3 family.

The enzyme catalyses (S)-malate + NAD(+) = oxaloacetate + NADH + H(+). Its function is as follows. Catalyzes the reversible oxidation of malate to oxaloacetate. This Rhodospirillum centenum (strain ATCC 51521 / SW) protein is Malate dehydrogenase.